A 607-amino-acid chain; its full sequence is MPNETLQNQIASLPENPGVYLMKNAQGEIIYVGKAAVLKDRVKSYFVPPSRLTPKTCQLVSQINELEYLITGSEQEALILELNLIKRHRPYFNVRLKDDKGFPYLKITLNEKWPRIYITRSMADDGGRYFGPFANTRSVRHTLQVLKELFRFRSCNRTEPEKHSRPCLEYDIHQCLSPCTGKISKSDYDHLISQAILFLEGKQDQVLKLLIRLMNEASARLDYETAALRRDQIASIKEVIEGQQLAARVTGEQDAIAFAQEGDLSMVQVFFIRRGKLIGRESFCLQGTREEKPGDILSEFAKQFYHSSTQIPPKIVTQYPVSDREILEKWLSQRRGDKVHITAGLRGQPKELINIVAENAREQLKQARIKNLSSSVTLTDALAELQTALGLSLPPQRIEGYDISNIQGTNAVGSMVVFENGKPQKAHYRRFRIKTVKGADDFSMLKEVISRRFGRVHREDAGESFARLPSLMLIDGGKGQLSSVKETLDKLGLEGQAVIGLAKEFEEIYLPHKSEPIRLAANSPALQLLQRVRDEAHRFALGYHLHIRQKSGLTSALDGIPGVGPSRRRLLIKTFGSVAGIRQASFEKLSQVKGINQALALSIKELL.

The GIY-YIG domain maps to 15–94 (ENPGVYLMKN…IKRHRPYFNV (80 aa)). In terms of domain architecture, UVR spans 204-239 (DQVLKLLIRLMNEASARLDYETAALRRDQIASIKEV).

The protein belongs to the UvrC family. As to quaternary structure, interacts with UvrB in an incision complex.

It is found in the cytoplasm. Its function is as follows. The UvrABC repair system catalyzes the recognition and processing of DNA lesions. UvrC both incises the 5' and 3' sides of the lesion. The N-terminal half is responsible for the 3' incision and the C-terminal half is responsible for the 5' incision. This chain is UvrABC system protein C, found in Dehalococcoides mccartyi (strain CBDB1).